A 226-amino-acid polypeptide reads, in one-letter code: Probable endonuclease LCL3 (226 aa).

A helical membrane pass occupies residues 15–32 (VFYTSILTGGILSSFYVY). A TNase-like domain is found at 53–212 (RTLFGRVTSV…RKKKIGMFQQ (160 aa)). R103 is an active-site residue. A Ca(2+)-binding site is contributed by D108. Active-site residues include E111 and R151.

It belongs to the LCL3 family.

Its subcellular location is the mitochondrion. It is found in the membrane. The chain is Probable endonuclease LCL3 (LCL3) from Yarrowia lipolytica (strain CLIB 122 / E 150) (Yeast).